A 326-amino-acid chain; its full sequence is Beta-ketoacyl-[acyl-carrier-protein] synthase III 2 (326 aa).

Active-site residues include Cys114 and His251. Residues 252-256 are ACP-binding; that stretch reads SANAR. Asn281 is an active-site residue.

The protein belongs to the thiolase-like superfamily. FabH family. Homodimer.

Its subcellular location is the cytoplasm. It carries out the reaction malonyl-[ACP] + acetyl-CoA + H(+) = 3-oxobutanoyl-[ACP] + CO2 + CoA. It functions in the pathway lipid metabolism; fatty acid biosynthesis. Functionally, catalyzes the condensation reaction of fatty acid synthesis by the addition to an acyl acceptor of two carbons from malonyl-ACP. Catalyzes the first condensation reaction which initiates fatty acid synthesis and may therefore play a role in governing the total rate of fatty acid production. Possesses both acetoacetyl-ACP synthase and acetyl transacylase activities. Its substrate specificity determines the biosynthesis of branched-chain and/or straight-chain of fatty acids. The sequence is that of Beta-ketoacyl-[acyl-carrier-protein] synthase III 2 from Staphylococcus epidermidis (strain ATCC 12228 / FDA PCI 1200).